We begin with the raw amino-acid sequence, 548 residues long: ATP synthase subunit alpha (548 aa).

172–179 (GDRKTGKT) lines the ATP pocket.

It belongs to the ATPase alpha/beta chains family. F-type ATPases have 2 components, CF(1) - the catalytic core - and CF(0) - the membrane proton channel. CF(1) has five subunits: alpha(3), beta(3), gamma(1), delta(1), epsilon(1). CF(0) has three main subunits: a(1), b(2) and c(9-12). The alpha and beta chains form an alternating ring which encloses part of the gamma chain. CF(1) is attached to CF(0) by a central stalk formed by the gamma and epsilon chains, while a peripheral stalk is formed by the delta and b chains.

It is found in the cell membrane. It catalyses the reaction ATP + H2O + 4 H(+)(in) = ADP + phosphate + 5 H(+)(out). In terms of biological role, produces ATP from ADP in the presence of a proton gradient across the membrane. The alpha chain is a regulatory subunit. This Mycolicibacterium smegmatis (strain ATCC 700084 / mc(2)155) (Mycobacterium smegmatis) protein is ATP synthase subunit alpha.